The primary structure comprises 75 residues: Disintegrin CTF-II (75 aa).

Residues 1–75 (ELLEEGEDCY…SDDCPRWNDL (75 aa)) enclose the Disintegrin domain. 6 disulfide bridges follow: Cys-9–Cys-24, Cys-11–Cys-19, Cys-18–Cys-41, Cys-32–Cys-38, Cys-37–Cys-62, and Cys-50–Cys-69. The short motif at 54–56 (RGD) is the Cell attachment site element.

It belongs to the venom metalloproteinase (M12B) family. P-II subfamily. P-IIa sub-subfamily. As to quaternary structure, monomer (disintegrin). In terms of tissue distribution, expressed by the venom gland.

Its subcellular location is the secreted. In terms of biological role, inhibits fibrinogen interaction with platelet receptors, and inhibits aggregation induced by ADP, thrombin, collagen and platelet-activating factor. Acts by binding to the alpha-IIb/beta-3 (ITGA2B/ITGB3) on the platelet surface. The chain is Disintegrin CTF-II from Protobothrops flavoviridis (Habu).